The following is a 90-amino-acid chain: Repetitive proline-rich cell wall protein 3 (90 aa).

The signal sequence occupies residues 1-24 (MASFVSFLVLLLAALILMPQGLAT). Residues 46–65 (KPPVYKPKPPVYKPKPPVYK) show a composition bias toward pro residues. Residues 46–90 (KPPVYKPKPPVYKPKPPVYKPPYKKPPYKKPPYGKYPPVEDNTHA) are disordered.

It belongs to the plant proline-rich protein superfamily. ENOD12 family.

The protein localises to the secreted. It localises to the cell wall. The chain is Repetitive proline-rich cell wall protein 3 (PRP3) from Glycine max (Soybean).